Reading from the N-terminus, the 159-residue chain is MSDSKQYIMTAEGVKKLEEELEYLKTVKRREITEKIKVALSYGDLSENSEYDEAKNEQAFVEGRIVQLENMLRNANVVDESEISLDAVSVGSIVKVKDYDFDEIIDFHIVGSAEADPMENKISNESPVGSALIGKKVGDVINVPVPDGISKFEILEIRV.

A coiled-coil region spans residues 14–76 (VKKLEEELEY…QLENMLRNAN (63 aa)).

The protein belongs to the GreA/GreB family.

Necessary for efficient RNA polymerase transcription elongation past template-encoded arresting sites. The arresting sites in DNA have the property of trapping a certain fraction of elongating RNA polymerases that pass through, resulting in locked ternary complexes. Cleavage of the nascent transcript by cleavage factors such as GreA or GreB allows the resumption of elongation from the new 3'terminus. GreA releases sequences of 2 to 3 nucleotides. The polypeptide is Transcription elongation factor GreA (Clostridium novyi (strain NT)).